The primary structure comprises 150 residues: UPF0178 protein Ssed_1350 (150 aa).

This sequence belongs to the UPF0178 family.

The polypeptide is UPF0178 protein Ssed_1350 (Shewanella sediminis (strain HAW-EB3)).